The sequence spans 103 residues: Pyrimidine/purine nucleoside phosphorylase (103 aa).

Belongs to the nucleoside phosphorylase PpnP family.

The catalysed reaction is a purine D-ribonucleoside + phosphate = a purine nucleobase + alpha-D-ribose 1-phosphate. It carries out the reaction adenosine + phosphate = alpha-D-ribose 1-phosphate + adenine. The enzyme catalyses cytidine + phosphate = cytosine + alpha-D-ribose 1-phosphate. It catalyses the reaction guanosine + phosphate = alpha-D-ribose 1-phosphate + guanine. The catalysed reaction is inosine + phosphate = alpha-D-ribose 1-phosphate + hypoxanthine. It carries out the reaction thymidine + phosphate = 2-deoxy-alpha-D-ribose 1-phosphate + thymine. The enzyme catalyses uridine + phosphate = alpha-D-ribose 1-phosphate + uracil. It catalyses the reaction xanthosine + phosphate = alpha-D-ribose 1-phosphate + xanthine. Its function is as follows. Catalyzes the phosphorolysis of diverse nucleosides, yielding D-ribose 1-phosphate and the respective free bases. Can use uridine, adenosine, guanosine, cytidine, thymidine, inosine and xanthosine as substrates. Also catalyzes the reverse reactions. The protein is Pyrimidine/purine nucleoside phosphorylase of Nocardia farcinica (strain IFM 10152).